The following is a 204-amino-acid chain: MIKKFLLFAMLNIFLTNKAHSNEEIIEISTEIQKEKYIPFLISRGKTQLEDLVKYTLEINPELDKNYVNTVAKTYIDESLIEGVNYDIAYAQMLLETGALKFNGIVSKEQHNFSXIGATNNLTKGNSFSNITEGIKAHIQHLKAYASKQNIKSNMVDPRFYLVKRGSAPTIYDLTGKWAKDKLYDKKLKKILLELLEYNNANKS.

A signal peptide spans 1 to 21 (MIKKFLLFAMLNIFLTNKAHS).

This is an uncharacterized protein from Borreliella burgdorferi (strain ATCC 35210 / DSM 4680 / CIP 102532 / B31) (Borrelia burgdorferi).